A 210-amino-acid polypeptide reads, in one-letter code: Large ribosomal subunit protein uL3 (210 aa).

Residues 122-155 form a disordered region; it reads NQKRNNFGRGPMSHGSKNHRAPGSIGAGTTPGRV.

Belongs to the universal ribosomal protein uL3 family. Part of the 50S ribosomal subunit. Forms a cluster with proteins L14 and L19.

Its function is as follows. One of the primary rRNA binding proteins, it binds directly near the 3'-end of the 23S rRNA, where it nucleates assembly of the 50S subunit. This is Large ribosomal subunit protein uL3 from Nostoc punctiforme (strain ATCC 29133 / PCC 73102).